Here is a 271-residue protein sequence, read N- to C-terminus: Eukaryotic translation initiation factor 2 subunit beta (271 aa).

Residues 223 to 247 form a C4-type zinc finger; it reads CLGCQSPDTILSKENRLFFLRCEKC.

Belongs to the eIF-2-beta/eIF-5 family. Eukaryotic translation initiation factor 2 eIF2 is a heterotrimeric complex composed of an alpha, a beta and a gamma subunit.

The protein localises to the cytoplasm. The protein resides in the cytosol. Its function is as follows. Component of the eIF2 complex that functions in the early steps of protein synthesis by forming a ternary complex with GTP and initiator tRNA. This complex binds to a 40S ribosomal subunit, followed by mRNA binding to form a 43S pre-initiation complex (43S PIC). Junction of the 60S ribosomal subunit to form the 80S initiation complex is preceded by hydrolysis of the GTP bound to eIF2 and release of an eIF2-GDP binary complex. In order for eIF2 to recycle and catalyze another round of initiation, the GDP bound to eIF2 must exchange with GTP by way of a reaction catalyzed by eIF2B. This Malus domestica (Apple) protein is Eukaryotic translation initiation factor 2 subunit beta.